We begin with the raw amino-acid sequence, 416 residues long: TNF receptor-associated factor 1 (416 aa).

The segment at 1–24 is disordered; the sequence is MASSSGSSPRPAPDENEFPFGCPP. Ser-146 bears the Phosphoserine mark. The stretch at 182 to 264 forms a coiled coil; the sequence is MKEKLLAELE…QSLRLMEEAS (83 aa). Glycyl lysine isopeptide (Lys-Gly) (interchain with G-Cter in ubiquitin) cross-links involve residues Lys-185 and Lys-193. One can recognise an MATH domain in the interval 266–412; the sequence is DGTFLWKITN…DDTMFLKCIV (147 aa).

Homotrimer. Heterotrimer with TRAF2. Interacts with TNFRSF1A/TNFR1, TNFRSF1B/TNFR2, TNFRSF4, TNFRSF5/CD40, TNFRSF8/CD30, TNFRSF9/CD137, TNFRSF11A/RANK, TNFRSF13C, TNFRSF18/AITR, TNFRSF17/BCMA, TNFRSF19/TROY, TNFRSF19L/RELT, XEDAR, EDAR, Epstein-Barr virus BNFL1/LMP-1, TANK/ITRAF, TRAIP and RIPK2. Interacts with BIRC2 and BIRC3 N-terminus; a single BIRC2 or BIRC3 molecule interacts with a heterotrimer formed by TRAF1 and TRAF2. Interacts with NFATC2IP, TRAFD1 and with HIVEP3. Interacts with MAP3K14. Interacts with GPS2. Post-translationally, polyubiquitinated by BIRC2 and/or BIRC3, leading to its subsequent proteasomal degradation. Ubiquitinated by the SCF(FBXL2) complex, leading to its degradation by the proteasome.

Its function is as follows. Adapter molecule that regulates the activation of NF-kappa-B and JNK. Plays a role in the regulation of cell survival and apoptosis. The heterotrimer formed by TRAF1 and TRAF2 is part of a E3 ubiquitin-protein ligase complex that promotes ubiquitination of target proteins, such as MAP3K14. The TRAF1/TRAF2 complex recruits the antiapoptotic E3 protein-ubiquitin ligases BIRC2 and BIRC3 to TNFRSF1B/TNFR2. The sequence is that of TNF receptor-associated factor 1 (TRAF1) from Homo sapiens (Human).